A 198-amino-acid polypeptide reads, in one-letter code: Probable GTP-binding protein EngB (198 aa).

An EngB-type G domain is found at 21–195 (NFSEVAFLGR…EDIIIDQTLG (175 aa)). GTP-binding positions include 29 to 36 (GRSNVGKS), 56 to 60 (GKTQL), 81 to 84 (DLPG), 151 to 154 (TKCD), and 174 to 176 (VSN). Mg(2+)-binding residues include serine 36 and threonine 58.

The protein belongs to the TRAFAC class TrmE-Era-EngA-EngB-Septin-like GTPase superfamily. EngB GTPase family. Mg(2+) serves as cofactor.

Necessary for normal cell division and for the maintenance of normal septation. This chain is Probable GTP-binding protein EngB, found in Campylobacter jejuni subsp. jejuni serotype O:6 (strain 81116 / NCTC 11828).